Reading from the N-terminus, the 421-residue chain is 26S proteasome non-ATPase regulatory subunit 11A (421 aa).

In terms of domain architecture, PCI spans 227-391; that stretch reads AYSYFYEAFE…GVLIVFDEPP (165 aa).

The protein belongs to the proteasome subunit S9 family. In terms of assembly, component of the lid subcomplex of the 19S proteasome regulatory particle complex (also named PA700 complex). The 26S proteasome consists of a 20S proteasome core and two 19S regulatory subunits.

It localises to the nucleus. The protein resides in the cytoplasm. Its subcellular location is the cytosol. Component of the lid subcomplex of the 26S proteasome, a multiprotein complex involved in the ATP-dependent degradation of ubiquitinated proteins. In the complex, psmd11a is required for proteasome assembly. The protein is 26S proteasome non-ATPase regulatory subunit 11A (psmd11a) of Danio rerio (Zebrafish).